A 347-amino-acid chain; its full sequence is Pre-B-cell leukemia transcription factor 1 (347 aa).

Residues 1–40 are disordered; the sequence is MDDQPRLMHSHPGVGMAGHPSLSQHMQDGTGANEGEGGRK. One can recognise a PBC domain in the interval 38-232; it reads GRKQDIGDIL…VMILRSRFLD (195 aa). Positions 45–124 are PBC-A; that stretch reads DILQQIMTIT…EGVAGPEKGG (80 aa). The PBC-B stretch occupies residues 127–232; it reads AAAAAAAAAS…VMILRSRFLD (106 aa). The segment at residues 233–295 is a DNA-binding region (homeobox; TALE-type); sequence ARRKRRNFNK…NKRIRYKKNI (63 aa). Positions 318 to 331 are enriched in polar residues; sequence VHGSQANSPSTPSS. A disordered region spans residues 318-347; the sequence is VHGSQANSPSTPSSAGGYPSPCYQSDRRIQ.

This sequence belongs to the TALE/PBX homeobox family. As to quaternary structure, forms a heterodimer with meis1; the interaction is necessary for neural fate induction.

It localises to the nucleus. Its function is as follows. Acts as a transcriptional activator in complex with isoform 2 of meis1, to induce posterior neural and neural crest gene expression, and thereby specify hindbrain and neural crest cell fate. Binds to a highly conserved region in the promoter of the neural crest gene zic3. Required for the nuclear transport or retention of meis1. This is Pre-B-cell leukemia transcription factor 1 from Xenopus tropicalis (Western clawed frog).